The sequence spans 518 residues: Pre-glycoprotein polyprotein GP complex (518 aa).

A lipid anchor (N-myristoyl glycine; by host) is attached at G2. The Extracellular segment spans residues 2–17; sequence GQVIGFFQSLPNIINE. The helical transmembrane segment at 18–33 threads the bilayer; the sequence is ALNIALICVALIAILK. Over 34 to 58 the chain is Cytoplasmic; it reads GIVNIWKSGLIQLFIFLILAGRSCS. C57 provides a ligand contact to Zn(2+). Residues 59–456 lie on the Extracellular side of the membrane; it reads HTFQIGRNHE…QGSTPLSLVD (398 aa). Disulfide bonds link C87–C258, C303–C316, C325–C334, and C388–C409. N-linked (GlcNAc...) asparagine; by host glycosylation is found at N90, N112, N127, N180, and N251. N-linked (GlcNAc...) asparagine; by host glycans are attached at residues N389, N397, N414, and N419. The chain crosses the membrane as a helical span at residues 457–477; sequence LCFWSTLFYVTTLFAHLVGFP. Over 478–518 the chain is Cytoplasmic; the sequence is THRHILDGPCPKPHRLTKKGICSCGHFGIPGKPVRWVKRSR. Residues H479, H481, C487, H491, C499, and C501 each contribute to the Zn(2+) site.

It belongs to the arenaviridae GPC protein family. As to quaternary structure, interacts with glycoprotein G2. Part of the GP complex (GP-C) together with glycoprotein G1 and glycoprotein G2. The GP-complex interacts with protein Z, which interacts with ribonucleocapsid; these interactions may induce virion budding. In terms of assembly, homotrimer; disulfide-linked. In pre-fusion state, G1 homotrimers bind G2 homotrimers via ionic interactions. Part of the GP complex (GP-C) together with glycoprotein G2 and the stable signal peptide. The GP-complex interacts with protein Z, which interacts with ribonucleocapsid; these interactions may induce virion budding. Homotrimer. Interacts with the stable signal peptide. In pre-fusion state, G2 homotrimers bind G1 homotrimers via ionic interactions. Part of the GP complex (GP-C) together with glycoprotein G1 and the stable signal peptide. Acidification in the endosome triggers rearrangements, which ultimately leads to a 6 helix bundle formed by the two heptad repeat domains (HR1 and HR2) in post-fusion state. The GP-complex interacts with protein Z, which interacts with ribonucleocapsid; these interactions may induce virion budding. Specific enzymatic cleavages in vivo yield mature proteins. GP-C polyprotein is cleaved in the endoplasmic reticulum by the host protease MBTPS1. Only cleaved glycoprotein is incorporated into virions. Post-translationally, the SSP remains stably associated with the GP complex following cleavage by signal peptidase and plays crucial roles in the trafficking of GP through the secretory pathway. In terms of processing, myristoylation is necessary for GP2-mediated fusion activity.

Its subcellular location is the virion membrane. The protein localises to the host endoplasmic reticulum membrane. It localises to the host Golgi apparatus membrane. It is found in the host cell membrane. In terms of biological role, functions as a cleaved signal peptide that is retained as the third component of the GP complex (GP-C). Helps to stabilize the spike complex in its native conformation. The SSP is required for efficient glycoprotein expression, post-translational maturation cleavage of G1 and G2, glycoprotein transport to the cell surface plasma membrane, formation of infectious virus particles, and acid pH-dependent glycoprotein-mediated cell fusion. Its function is as follows. Forms the virion spikes together with glycoprotein G2. The glycoprotein spike trimers are connected to the underlying matrix. Mediates virus attachment to host receptor alpha-dystroglycan DAG1. This attachment induces virion internalization predominantly through clathrin- and caveolin-independent endocytosis. Functionally, forms the virion spikes together with glycoprotein G1. The glycoprotein spike trimers are connected to the underlying matrix. Class I viral fusion protein that directs fusion of viral and host endosomal membranes, leading to delivery of the nucleocapsid into the cytoplasm. Membrane fusion is mediated by irreversible conformational changes induced by acidification. The protein is Pre-glycoprotein polyprotein GP complex of Bolomys (OLVV).